A 1888-amino-acid polypeptide reads, in one-letter code: Zinc finger protein 106 (1888 aa).

The C2H2-type 1; atypical zinc-finger motif lies at 5-29; that stretch reads RKCILCHIVYGSKKEMDEHMRSMLH. The C2H2-type 2; atypical zinc finger occupies 43–67; that stretch reads HECRVCRVTEVGLSAYAKHISGQLH. A disordered region spans residues 68 to 187; it reads KDNVDAQERE…GPRGSSVWHK (120 aa). A compositionally biased stretch (acidic residues) spans 75–89; it reads EREDDGKEEEEEEYF. Composition is skewed to basic and acidic residues over residues 90–108, 118–138, and 150–160; these read DKEL…RQDE, SDDR…DRES, and PQRDWKWEKDG. Residue K91 forms a Glycyl lysine isopeptide (Lys-Gly) (interchain with G-Cter in SUMO2) linkage. Residue K155 forms a Glycyl lysine isopeptide (Lys-Gly) (interchain with G-Cter in SUMO2) linkage. Residues 161 to 175 are compositionally biased toward polar residues; the sequence is FNSTRKNSFPHSLRN. Glycyl lysine isopeptide (Lys-Gly) (interchain with G-Cter in SUMO2) cross-links involve residues K265 and K309. Disordered stretches follow at residues 287–326 and 338–362; these read KKSN…DTFP and RESQ…TKAR. Residues 296-311 show a composition bias toward basic and acidic residues; that stretch reads SQERCKWQRQDRDKAA. Polar residues predominate over residues 342 to 357; that stretch reads TTKQTDTAASKINGKN. Residues K375, K384, K390, K435, K469, and K479 each participate in a glycyl lysine isopeptide (Lys-Gly) (interchain with G-Cter in SUMO2) cross-link. Disordered stretches follow at residues 410 to 437 and 453 to 525; these read KPVD…HKAI and TEQS…TSKS. Over residues 481–491 the composition is skewed to basic residues; sequence GPHKQNLKNRS. Residues 507-525 are compositionally biased toward polar residues; it reads LLNTSTLEGSHGSSYTSKS. Glycyl lysine isopeptide (Lys-Gly) (interchain with G-Cter in SUMO2) cross-links involve residues K524, K534, and K544. Residues 537–617 form a disordered region; sequence KTVSGTQKEP…SAMTSDAENH (81 aa). Residues 551 to 572 are compositionally biased toward polar residues; it reads NNTSQKAQDTVLQCPKTLQNPL. K577 is covalently cross-linked (Glycyl lysine isopeptide (Lys-Gly) (interchain with G-Cter in SUMO2)). Basic and acidic residues predominate over residues 577-593; sequence KRMENDAKESSVEESAK. Positions 597–613 are enriched in polar residues; the sequence is SIESQPHSAGNSAMTSD. K620 participates in a covalent cross-link: Glycyl lysine isopeptide (Lys-Gly) (interchain with G-Cter in SUMO2). The disordered stretch occupies residues 635-661; it reads STHTVDKEQGSQIPGTPENLSTSPRNS. The span at 644 to 661 shows a compositional bias: polar residues; it reads GSQIPGTPENLSTSPRNS. Phosphoserine occurs at positions 657 and 677. Residues K687, K700, K721, K738, K758, K792, and K824 each participate in a glycyl lysine isopeptide (Lys-Gly) (interchain with G-Cter in SUMO2) cross-link. Residues 696 to 728 are disordered; that stretch reads NNLVKSDGPFETESFEDTSLDTELQKPDLNNQP. 4 positions are modified to phosphoserine: S876, S878, S881, and S909. The segment at 894-920 is disordered; the sequence is TGEGTGKENEAQQSPSPNTALSAAQSQ. Over residues 904–920 the composition is skewed to polar residues; it reads AQQSPSPNTALSAAQSQ. K921 participates in a covalent cross-link: Glycyl lysine isopeptide (Lys-Gly) (interchain with G-Cter in SUMO2). A Phosphoserine modification is found at S953. Over residues 968 to 986 the composition is skewed to basic and acidic residues; sequence ARDLHSQERSTPLSERHAQ. Disordered stretches follow at residues 968-1064, 1281-1461, and 1468-1487; these read ARDL…ERSQ, EQGN…SKKD, and QNPI…TSEL. A compositionally biased stretch (low complexity) spans 992-1008; the sequence is GNSLSSNASSGHAVSSL. A compositionally biased stretch (polar residues) spans 1013–1022; it reads TDSSCTSGAE. T1036 carries the phosphothreonine modification. Residues S1040, S1041, and S1046 each carry the phosphoserine modification. Over residues 1050–1060 the composition is skewed to basic residues; it reads KNKRRKIKGKK. Residues 1281–1296 are compositionally biased toward polar residues; sequence EQGNSRSKGNSPSCQS. 3 positions are modified to phosphoserine: S1291, S1293, and S1296. K1310 is covalently cross-linked (Glycyl lysine isopeptide (Lys-Gly) (interchain with G-Cter in SUMO2)). Over residues 1312-1321 the composition is skewed to low complexity; it reads SSGSEACSSS. S1313 carries the post-translational modification Phosphoserine. Residue K1335 forms a Glycyl lysine isopeptide (Lys-Gly) (interchain with G-Cter in SUMO2) linkage. Residues 1338-1354 are compositionally biased toward polar residues; it reads QSPADQPEQQAESTLAS. Residue S1339 is modified to Phosphoserine. A compositionally biased stretch (basic residues) spans 1360-1373; the sequence is SKKKKKLRKKKTLR. S1381 is subject to Phosphoserine. T1383 bears the Phosphothreonine mark. Residues K1391, K1403, K1406, and K1460 each participate in a glycyl lysine isopeptide (Lys-Gly) (interchain with G-Cter in SUMO2) cross-link. A compositionally biased stretch (basic and acidic residues) spans 1450 to 1461; that stretch reads GDEKPDSPSKKD. Positions 1470–1487 are enriched in polar residues; sequence PIETSRSGCDEVSSTSEL. S1474 carries the post-translational modification Phosphoserine. Glycyl lysine isopeptide (Lys-Gly) (interchain with G-Cter in SUMO2) cross-links involve residues K1492 and K1509. The tract at residues 1509 to 1531 is disordered; that stretch reads KASKHSSEISSEPGDDEEPTEGS. WD repeat units follow at residues 1534-1573, 1575-1618, 1659-1700, 1703-1742, 1743-1780, and 1783-1820; these read GHQA…GVFE, HTSK…EQLQ, HGPR…LLRT, GHSK…RIYK, GHNH…RLQV, and GHKD…NYRC. A Glycyl lysine isopeptide (Lys-Gly) (interchain with G-Cter in SUMO2) cross-link involves residue K1590. Residue K1742 forms a Glycyl lysine isopeptide (Lys-Gly) (interchain with G-Cter in SUMO2) linkage. The segment at 1818–1843 adopts a C2H2-type 3; atypical zinc-finger fold; it reads YRCWWYGCTLIFGVVDHLKQHLLTDH. K1869 is covalently cross-linked (Glycyl lysine isopeptide (Lys-Gly) (interchain with G-Cter in SUMO2)).

As to quaternary structure, interacts with KNOP1. Interacts with TARDBP and NUP107. Interacts (via N-terminus) with RBM39. Interacts with the SH3 domains of FYN and GRB2. In terms of processing, phosphorylated by FYN in vitro. Widely expressed, with strongest expression in skeletal muscle, heart and brain (at protein level). Detected in spinal cord motor neurons.

The protein localises to the nucleus. The protein resides in the nucleolus. It localises to the nucleus speckle. Its function is as follows. RNA-binding protein. Specifically binds to 5'-GGGGCC-3' sequence repeats in RNA. Essential for maintenance of peripheral motor neuron and skeletal muscle function. Required for normal expression and/or alternative splicing of a number of genes in spinal cord and skeletal muscle, including the neurite outgrowth inhibitor RTN4. Also contributes to normal mitochondrial respiratory function in motor neurons, via an unknown mechanism. The sequence is that of Zinc finger protein 106 (Znf106) from Mus musculus (Mouse).